The primary structure comprises 571 residues: Urease subunit alpha (571 aa).

Positions 132 to 571 (GAIDTHIHFI…LPMGQKYFLF (440 aa)) constitute a Urease domain. Residues His137, His139, and Lys220 each coordinate Ni(2+). An N6-carboxylysine modification is found at Lys220. Residue His222 participates in substrate binding. His249 and His275 together coordinate Ni(2+). His323 serves as the catalytic Proton donor. Ni(2+) is bound at residue Asp363.

The protein belongs to the metallo-dependent hydrolases superfamily. Urease alpha subunit family. Heterotrimer of UreA (gamma), UreB (beta) and UreC (alpha) subunits. Three heterotrimers associate to form the active enzyme. Requires Ni cation as cofactor. Carboxylation allows a single lysine to coordinate two nickel ions.

The protein resides in the cytoplasm. It carries out the reaction urea + 2 H2O + H(+) = hydrogencarbonate + 2 NH4(+). It functions in the pathway nitrogen metabolism; urea degradation; CO(2) and NH(3) from urea (urease route): step 1/1. The polypeptide is Urease subunit alpha (Corynebacterium urealyticum (strain ATCC 43042 / DSM 7109)).